The primary structure comprises 1419 residues: Agglutinin-like protein 5 (1419 aa).

The signal sequence occupies residues 1-17 (MIQQFTLLFLYLSFATA). 4 cysteine pairs are disulfide-bonded: cysteine 73-cysteine 150, cysteine 96-cysteine 112, cysteine 205-cysteine 298, and cysteine 227-cysteine 256. ALS repeat units lie at residues 365–396 (TTIT…VDVP), 401–432 (TTVT…VQVP), 438–469 (TTTT…VREP), 474–505 (VTTT…VREP), 510–541 (VTTT…VREP), 546–577 (VTTT…VKEP), 582–613 (VTTT…VREP), and 618–649 (VTTT…IHDP). Disordered stretches follow at residues 652 to 752 (ESSS…SSSS) and 864 to 885 (ASSF…SSDQ). Residue asparagine 665 is glycosylated (N-linked (GlcNAc...) asparagine). N-linked (GlcNAc...) asparagine glycosylation occurs at asparagine 919. Disordered stretches follow at residues 926 to 966 (SESE…DSST), 981 to 1035 (TGMP…TKSS), 1051 to 1093 (TSTL…KESS), 1134 to 1177 (EDNE…TTDV), and 1211 to 1252 (ATSL…NRLS). 3 stretches are compositionally biased toward low complexity: residues 928-942 (SESS…ASES), 951-966 (SEST…DSST), and 993-1011 (TSDV…PTSA). The span at 1012-1022 (EQSITDNPNID) shows a compositional bias: polar residues. Low complexity-rich tracts occupy residues 1023 to 1035 (SSQT…TKSS) and 1051 to 1078 (TSTL…GNIN). Polar residues-rich tracts occupy residues 1079–1093 (AGSS…KESS) and 1138–1160 (PNTF…SVLS). Over residues 1212-1230 (TSLRSTSSSSNHATESSGT) the composition is skewed to low complexity. N-linked (GlcNAc...) asparagine glycans are attached at residues asparagine 1301 and asparagine 1326. The GPI-anchor amidated serine moiety is linked to residue serine 1398. Positions 1399-1419 (SATKHPSWLLKFISVALFFFL) are cleaved as a propeptide — removed in mature form.

It belongs to the ALS family. Forms homodimers through the tandem repeats. Aggregates in amyloid-like structures, with self-propagating secondary-structure changes, amyloid-characteristic dye binding, and induced birefringence. In terms of processing, N-glycosylated and O-glycosylated. Post-translationally, the GPI-anchor is attached to the protein in the endoplasmic reticulum and serves to target the protein to the cell surface. There, the glucosamine-inositol phospholipid moiety is cleaved off and the GPI-modified mannoprotein is covalently attached via its lipidless GPI glycan remnant to the 1,6-beta-glucan of the outer cell wall layer.

The protein resides in the cell membrane. Its subcellular location is the secreted. It is found in the cell wall. In terms of biological role, cell surface adhesion protein which mediates both yeast-to-host tissue adherence and yeast aggregation. Plays an important role in the pathogenesis of C.albicans infections. Forms amyloid structures, essential for cell-cell association and cell-substrate adhesion to polystyrene. This is Agglutinin-like protein 5 (ALS5) from Candida albicans (Yeast).